Reading from the N-terminus, the 388-residue chain is MSKKNFLFTSESVSEGHPDKVADRISDAVVDAFLGADPYARVAVETLVTTNLIVMAGEVRGPASVNAALMDELARHAVKDIGYEQDGFHWKNAEIINRVHSQSADIAQGVDAAGDKDEGAGDQGIMFGYACNETPVLMPAPIYYSHEILKSLAEARHSGAAPQLLPDSKSQVTLEYRDGKPVRATSVVVSHQHVDGLSQADIKEIVRPHVKNVLPEGWMPAEDQFYVNPTGRFVIGGPDGDTGLTGRKIIVDTYGGAAPHGGGAFSGKDPTKVDRSAAYAARYLAKNVVASGLADKCVIQLSYAIGVSKPLSVYVDTSGTCKVDEDKLAVVLQQLVDLSPRGIRTHLGLNKPIYARTAAYGHFGRSPDADGGFSWEKTDLVEQLKKAF.

Residue His17 coordinates ATP. Mg(2+) is bound at residue Asp19. Glu45 provides a ligand contact to K(+). Residues Glu58 and Gln102 each contribute to the L-methionine site. Positions 102-112 (QSADIAQGVDA) are flexible loop. Residues 167–169 (DSK), 232–233 (RF), Asp241, 247–248 (RK), Ala264, and Lys268 each bind ATP. Position 241 (Asp241) interacts with L-methionine. L-methionine is bound at residue Lys272.

It belongs to the AdoMet synthase family. Homotetramer; dimer of dimers. Mg(2+) is required as a cofactor. Requires K(+) as cofactor.

It is found in the cytoplasm. It carries out the reaction L-methionine + ATP + H2O = S-adenosyl-L-methionine + phosphate + diphosphate. Its pathway is amino-acid biosynthesis; S-adenosyl-L-methionine biosynthesis; S-adenosyl-L-methionine from L-methionine: step 1/1. Functionally, catalyzes the formation of S-adenosylmethionine (AdoMet) from methionine and ATP. The overall synthetic reaction is composed of two sequential steps, AdoMet formation and the subsequent tripolyphosphate hydrolysis which occurs prior to release of AdoMet from the enzyme. In Paramagnetospirillum magneticum (strain ATCC 700264 / AMB-1) (Magnetospirillum magneticum), this protein is S-adenosylmethionine synthase.